We begin with the raw amino-acid sequence, 398 residues long: Riboflavin biosynthesis protein RibBA (398 aa).

Positions Met-1–Asn-199 are DHBP synthase. Residues Arg-26–Glu-27, Asp-31, Arg-138–Thr-142, and Glu-162 each bind D-ribulose 5-phosphate. Glu-27 is a binding site for Mg(2+). Position 141 (His-141) interacts with Mg(2+). Residues Ile-200–Phe-398 are GTP cyclohydrolase II. GTP is bound at residue Arg-251–Glu-255. Zn(2+) is bound by residues Cys-256, Cys-267, and Cys-269. Residues Gln-272, Glu-294–Arg-296, and Thr-316 contribute to the GTP site. The Proton acceptor; for GTP cyclohydrolase activity role is filled by Asp-328. Arg-330 serves as the catalytic Nucleophile; for GTP cyclohydrolase activity. Residues Thr-351 and Lys-356 each coordinate GTP.

It in the N-terminal section; belongs to the DHBP synthase family. The protein in the C-terminal section; belongs to the GTP cyclohydrolase II family. Requires Mg(2+) as cofactor. Mn(2+) is required as a cofactor. Zn(2+) serves as cofactor.

It catalyses the reaction D-ribulose 5-phosphate = (2S)-2-hydroxy-3-oxobutyl phosphate + formate + H(+). It carries out the reaction GTP + 4 H2O = 2,5-diamino-6-hydroxy-4-(5-phosphoribosylamino)-pyrimidine + formate + 2 phosphate + 3 H(+). Its pathway is cofactor biosynthesis; riboflavin biosynthesis; 2-hydroxy-3-oxobutyl phosphate from D-ribulose 5-phosphate: step 1/1. It participates in cofactor biosynthesis; riboflavin biosynthesis; 5-amino-6-(D-ribitylamino)uracil from GTP: step 1/4. Functionally, catalyzes the conversion of D-ribulose 5-phosphate to formate and 3,4-dihydroxy-2-butanone 4-phosphate. Catalyzes the conversion of GTP to 2,5-diamino-6-ribosylamino-4(3H)-pyrimidinone 5'-phosphate (DARP), formate and pyrophosphate. The sequence is that of Riboflavin biosynthesis protein RibBA from Bacillus velezensis (strain DSM 23117 / BGSC 10A6 / LMG 26770 / FZB42) (Bacillus amyloliquefaciens subsp. plantarum).